We begin with the raw amino-acid sequence, 1234 residues long: ATP-dependent helicase/nuclease subunit A (1234 aa).

A UvrD-like helicase ATP-binding domain is found at 2–475; it reads TQFTTSQQAA…IILAENFRST (474 aa). 23–30 lines the ATP pocket; it reads ASAGSGKT. Residues 507–806 enclose the UvrD-like helicase C-terminal domain; it reads YGALDYGDAH…KLMTIHKSKG (300 aa).

This sequence belongs to the helicase family. AddA subfamily. Heterodimer of AddA and AddB/RexB. Mg(2+) is required as a cofactor.

The catalysed reaction is Couples ATP hydrolysis with the unwinding of duplex DNA by translocating in the 3'-5' direction.. It carries out the reaction ATP + H2O = ADP + phosphate + H(+). The heterodimer acts as both an ATP-dependent DNA helicase and an ATP-dependent, dual-direction single-stranded exonuclease. Recognizes the chi site generating a DNA molecule suitable for the initiation of homologous recombination. The AddA nuclease domain is required for chi fragment generation; this subunit has the helicase and 3' -&gt; 5' nuclease activities. In Lacticaseibacillus paracasei (strain ATCC 334 / BCRC 17002 / CCUG 31169 / CIP 107868 / KCTC 3260 / NRRL B-441) (Lactobacillus paracasei), this protein is ATP-dependent helicase/nuclease subunit A.